We begin with the raw amino-acid sequence, 197 residues long: Imidazoleglycerol-phosphate dehydratase (197 aa).

This sequence belongs to the imidazoleglycerol-phosphate dehydratase family.

Its subcellular location is the cytoplasm. It catalyses the reaction D-erythro-1-(imidazol-4-yl)glycerol 3-phosphate = 3-(imidazol-4-yl)-2-oxopropyl phosphate + H2O. Its pathway is amino-acid biosynthesis; L-histidine biosynthesis; L-histidine from 5-phospho-alpha-D-ribose 1-diphosphate: step 6/9. The chain is Imidazoleglycerol-phosphate dehydratase from Nitrosomonas europaea (strain ATCC 19718 / CIP 103999 / KCTC 2705 / NBRC 14298).